We begin with the raw amino-acid sequence, 96 residues long: UPF0235 protein VCM66_0443 (96 aa).

This sequence belongs to the UPF0235 family.

This chain is UPF0235 protein VCM66_0443, found in Vibrio cholerae serotype O1 (strain M66-2).